The chain runs to 122 residues: Small ribosomal subunit protein uS12cz/uS12cy (122 aa).

It belongs to the universal ribosomal protein uS12 family. Part of the 30S ribosomal subunit.

The protein localises to the plastid. The protein resides in the chloroplast. Its function is as follows. With S4 and S5 plays an important role in translational accuracy. Located at the interface of the 30S and 50S subunits. This is Small ribosomal subunit protein uS12cz/uS12cy (rps12-A) from Triticum aestivum (Wheat).